Here is a 359-residue protein sequence, read N- to C-terminus: tRNA-specific 2-thiouridylase MnmA (359 aa).

Residues 6-13 and Leu32 each bind ATP; that span reads AMSGGVDS. Cys101 functions as the Nucleophile in the catalytic mechanism. A disulfide bridge connects residues Cys101 and Cys193. Gly125 is a binding site for ATP. The interaction with tRNA stretch occupies residues 143–145; the sequence is KDQ. Residue Cys193 is the Cysteine persulfide intermediate of the active site.

Belongs to the MnmA/TRMU family.

It localises to the cytoplasm. It catalyses the reaction S-sulfanyl-L-cysteinyl-[protein] + uridine(34) in tRNA + AH2 + ATP = 2-thiouridine(34) in tRNA + L-cysteinyl-[protein] + A + AMP + diphosphate + H(+). Its function is as follows. Catalyzes the 2-thiolation of uridine at the wobble position (U34) of tRNA, leading to the formation of s(2)U34. This chain is tRNA-specific 2-thiouridylase MnmA, found in Mycobacterium sp. (strain JLS).